A 515-amino-acid polypeptide reads, in one-letter code: MEVLASSSLSPISFTKPNKINPNFSIQVKLWVKQPPKISKASKFSYARSRSNISRSNAANPGVVFVCNRFLCVIERNDQRKLSGKVMMKSSVNFRQNLSVALVRIVSVLLVSSISVVTTDSPPSWGLTEENLLFLEAWRTIDRAYIDKTFNGQSWFRYRETALRNEPMNTREETYMAIKKMVATLDDPFTRFLEPGKFKSLRSGTQGAVTGVGLSIGYPTASDGPPAGLVVISAAPGGPANRAGILPGDVIQGIDNTTTETLTIYDAAQMLQGPEGSAVELAIRSGPETRLLTLTRERVSVNPVKSRLCELPGSGSNSPKIGYIKLTTFNQNASSAVREAIETLRGNNVNAFVLDLRDNSGGSFPEGIEIAKFWLDKGVIVYICDSRGVRDIYDTDGSNAIATSEPLAVLVNKGTASASEILAGALKDNKRALVYGEPTYGKGKIQSVFELSDGSGLAVTVARYETPAHTDIDKVGVTPDHPLPKSFPKDEEAFCGCLKDPTAACYLNQGLLFSR.

The PDZ domain occupies 198–286 (FKSLRSGTQG…SAVELAIRSG (89 aa)). Residues S417 and K442 each act as charge relay system in the active site.

This sequence belongs to the peptidase S41A family.

Its subcellular location is the plastid. It is found in the chloroplast thylakoid lumen. The enzyme catalyses The enzyme shows specific recognition of a C-terminal tripeptide, Xaa-Yaa-Zaa, in which Xaa is preferably Ala or Leu, Yaa is preferably Ala or Tyr, and Zaa is preferably Ala, but then cleaves at a variable distance from the C-terminus. A typical cleavage is -Ala-Ala-|-Arg-Ala-Ala-Lys-Glu-Asn-Tyr-Ala-Leu-Ala-Ala.. Protease involved in the C-terminal processing of the chloroplastic D1 protein of photosystem II. This proteolytic processing is necessary to allow the light-driven assembly of the tetranuclear manganese cluster, which is responsible for photosynthetic water oxidation. This Arabidopsis thaliana (Mouse-ear cress) protein is Carboxyl-terminal-processing peptidase 2, chloroplastic (CTPA2).